Reading from the N-terminus, the 1133-residue chain is Probable cation-transporting ATPase 9 (1133 aa).

The Cytoplasmic portion of the chain corresponds to 1–6; that stretch reads MRVSSI. A helical membrane pass occupies residues 7–28; sequence EAEMENPIDVDKTDVEGELKIK. At 29–34 the chain is on the extracellular side; it reads QVTLLR. The chain crosses the membrane as a helical span at residues 35–53; the sequence is ENIVKKIVFFLVAIFCSDR. The Cytoplasmic segment spans residues 54-167; it reads PSVLKKVFYE…IEINVPSFLT (114 aa). The helical transmembrane segment at 168–190 threads the bilayer; it reads LMWREFKKPINFLLYFGIIVWGI. Topologically, residues 191-193 are extracellular; sequence EQM. A helical transmembrane segment spans residues 194-212; the sequence is YVSTAITVVFTTTINSLIC. The Cytoplasmic portion of the chain corresponds to 213 to 363; sequence IYIRGVMQKL…PFNKKFQQQA (151 aa). Residues 364-383 traverse the membrane as a helical segment; it reads VKLTILMATLLLIGFLSTLS. Over 384–396 the chain is Extracellular; the sequence is RLLDIELPPLFIA. Residues 397 to 418 traverse the membrane as a helical segment; sequence FRFLDILIYSAPPGMPMLIAIT. Residues 419 to 887 are Cytoplasmic-facing; the sequence is NFVGLKRLKN…NSVEIFKGYL (469 aa). Aspartate 451 functions as the 4-aspartylphosphate intermediate in the catalytic mechanism. Residues aspartate 827 and aspartate 831 each coordinate Mg(2+). The helical transmembrane segment at 888 to 906 threads the bilayer; that stretch reads QVALLRYLGFLTLAYFYSS. Over 907–915 the chain is Extracellular; that stretch reads YSSGQMDWQ. The chain crosses the membrane as a helical span at residues 916 to 931; sequence ALASGYFLVYLILGCN. The Cytoplasmic segment spans residues 932–948; sequence TPLKKLEKSVFDDNLFS. Residues 949–972 traverse the membrane as a helical segment; it reads IYNVTSVLFGFTLHILSIVGCVES. The Extracellular portion of the chain corresponds to 973–994; that stretch reads LHASPIYKEVNSLDAENNFQFE. Residues 995–1018 traverse the membrane as a helical segment; the sequence is TQHNTVLNFNILINFFYVIISNHI. Residues 1019–1030 lie on the Cytoplasmic side of the membrane; it reads GKPMKDRYYKNT. A helical membrane pass occupies residues 1031 to 1050; it reads IAIYYDLGLIYTCKCMILQV. Residues 1051–1101 are Extracellular-facing; the sequence is LLILEHTHHGLIFLILLLDQEFSSSLTVQVYFSLPMNLFLPEEFSLNFTQE. Residues 1102–1124 form a helical membrane-spanning segment; it reads VKKEKELLICNSSSTILEVDYNL. Residues 1125 to 1133 lie on the Cytoplasmic side of the membrane; sequence RLNYFQQNF.

The protein belongs to the cation transport ATPase (P-type) (TC 3.A.3) family. Type V subfamily.

It is found in the membrane. The catalysed reaction is ATP + H2O = ADP + phosphate + H(+). This chain is Probable cation-transporting ATPase 9 (TPA9), found in Tetrahymena thermophila.